The sequence spans 172 residues: MRWIGIDPGLRITGFGVIDVDGQKLTYVASGTIESGDPAKGLPERLGALYAGVKEVLETYRPEQAAIEEVFLNVNPRSTLMLGQARGAVIAALVSEKLPVAEYSALRVKQAIVGTGRAAKPQVQEMVKRLLRLSRAPGTDASDALGVAICAAHHSQIPKAITSALASKKRSK.

Catalysis depends on residues aspartate 7, glutamate 68, and aspartate 140. Aspartate 7, glutamate 68, and aspartate 140 together coordinate Mg(2+).

It belongs to the RuvC family. In terms of assembly, homodimer which binds Holliday junction (HJ) DNA. The HJ becomes 2-fold symmetrical on binding to RuvC with unstacked arms; it has a different conformation from HJ DNA in complex with RuvA. In the full resolvosome a probable DNA-RuvA(4)-RuvB(12)-RuvC(2) complex forms which resolves the HJ. The cofactor is Mg(2+).

It localises to the cytoplasm. The catalysed reaction is Endonucleolytic cleavage at a junction such as a reciprocal single-stranded crossover between two homologous DNA duplexes (Holliday junction).. Functionally, the RuvA-RuvB-RuvC complex processes Holliday junction (HJ) DNA during genetic recombination and DNA repair. Endonuclease that resolves HJ intermediates. Cleaves cruciform DNA by making single-stranded nicks across the HJ at symmetrical positions within the homologous arms, yielding a 5'-phosphate and a 3'-hydroxyl group; requires a central core of homology in the junction. The consensus cleavage sequence is 5'-(A/T)TT(C/G)-3'. Cleavage occurs on the 3'-side of the TT dinucleotide at the point of strand exchange. HJ branch migration catalyzed by RuvA-RuvB allows RuvC to scan DNA until it finds its consensus sequence, where it cleaves and resolves the cruciform DNA. This chain is Crossover junction endodeoxyribonuclease RuvC, found in Polynucleobacter asymbioticus (strain DSM 18221 / CIP 109841 / QLW-P1DMWA-1) (Polynucleobacter necessarius subsp. asymbioticus).